We begin with the raw amino-acid sequence, 355 residues long: UPF0421 protein BCE_2776 (355 aa).

Helical transmembrane passes span 19-39 (IAVFLTVLVCEFFNIPTIFAV), 74-94 (FTFFLGHQALSYALAAMFTIV), 109-129 (TLTAVAMIPITADHYFTAFLI), and 131-151 (LATTSTGIIVSTLVNFFILPP).

Belongs to the UPF0421 family.

It is found in the cell membrane. The protein is UPF0421 protein BCE_2776 of Bacillus cereus (strain ATCC 10987 / NRS 248).